The following is a 190-amino-acid chain: Holliday junction branch migration complex subunit RuvA (190 aa).

Residues 1-64 (MIGRITGTLI…EDAQLLYGFG (64 aa)) are domain I. Residues 65-137 (SSAERSTFRE…MRGKLGADIG (73 aa)) are domain II. The interval 137–141 (GATPH) is flexible linker. The interval 142–190 (AAGGHQSDILNALLALGYSDKESQAALKKLPEGVDVSEGIRLALKALVR) is domain III.

It belongs to the RuvA family. As to quaternary structure, homotetramer. Forms an RuvA(8)-RuvB(12)-Holliday junction (HJ) complex. HJ DNA is sandwiched between 2 RuvA tetramers; dsDNA enters through RuvA and exits via RuvB. An RuvB hexamer assembles on each DNA strand where it exits the tetramer. Each RuvB hexamer is contacted by two RuvA subunits (via domain III) on 2 adjacent RuvB subunits; this complex drives branch migration. In the full resolvosome a probable DNA-RuvA(4)-RuvB(12)-RuvC(2) complex forms which resolves the HJ.

The protein resides in the cytoplasm. The RuvA-RuvB-RuvC complex processes Holliday junction (HJ) DNA during genetic recombination and DNA repair, while the RuvA-RuvB complex plays an important role in the rescue of blocked DNA replication forks via replication fork reversal (RFR). RuvA specifically binds to HJ cruciform DNA, conferring on it an open structure. The RuvB hexamer acts as an ATP-dependent pump, pulling dsDNA into and through the RuvAB complex. HJ branch migration allows RuvC to scan DNA until it finds its consensus sequence, where it cleaves and resolves the cruciform DNA. This chain is Holliday junction branch migration complex subunit RuvA, found in Bordetella parapertussis (strain 12822 / ATCC BAA-587 / NCTC 13253).